The following is a 462-amino-acid chain: UDP-N-acetylmuramoylalanine--D-glutamate ligase (462 aa).

117–123 (GTNGKTT) provides a ligand contact to ATP.

This sequence belongs to the MurCDEF family.

The protein localises to the cytoplasm. The enzyme catalyses UDP-N-acetyl-alpha-D-muramoyl-L-alanine + D-glutamate + ATP = UDP-N-acetyl-alpha-D-muramoyl-L-alanyl-D-glutamate + ADP + phosphate + H(+). The protein operates within cell wall biogenesis; peptidoglycan biosynthesis. In terms of biological role, cell wall formation. Catalyzes the addition of glutamate to the nucleotide precursor UDP-N-acetylmuramoyl-L-alanine (UMA). This is UDP-N-acetylmuramoylalanine--D-glutamate ligase from Parasynechococcus marenigrum (strain WH8102).